A 1155-amino-acid polypeptide reads, in one-letter code: uncharacterized protein (1155 aa).

The signal sequence occupies residues 1-19 (MNKNIFITLLISSLLLLSG). Cysteine 20 is lipidated: N-palmitoyl cysteine. Cysteine 20 is lipidated: S-diacylglycerol cysteine. Transmembrane regions (helical) follow at residues 291–311 (VSAI…IGNI), 395–415 (LGFI…FLIF), 424–444 (ALIT…FMLF), and 459–479 (ISYA…SMII).

The protein belongs to the TrbL/VirB6 family.

It localises to the cell membrane. This is an uncharacterized protein from Rickettsia felis (strain ATCC VR-1525 / URRWXCal2) (Rickettsia azadi).